The following is a 134-amino-acid chain: Protein NrdI (134 aa).

It belongs to the NrdI family.

Functionally, probably involved in ribonucleotide reductase function. The polypeptide is Protein NrdI (Yersinia pseudotuberculosis serotype O:1b (strain IP 31758)).